The following is a 301-amino-acid chain: Cutinase (301 aa).

The first 40 residues, 1–40 (MAVMTPRRERSSLLSRALQVTAAAATALVTAVSLAAPAHA), serve as a signal peptide directing secretion. Y100 is a poly(ethylene terephthalate) binding site. Catalysis depends on S170, which acts as the Nucleophile. Positions 171 and 195 each coordinate poly(ethylene terephthalate). Active-site charge relay system residues include D216 and H248. A disulfide bridge links C281 with C299.

The protein belongs to the AB hydrolase superfamily.

It is found in the secreted. The protein resides in the periplasm. It catalyses the reaction a butanoate ester + H2O = an aliphatic alcohol + butanoate + H(+). The catalysed reaction is (ethylene terephthalate)(n) + H2O = (ethylene terephthalate)(n-1) + 4-[(2-hydroxyethoxy)carbonyl]benzoate + H(+). The enzyme catalyses cutin + H2O = cutin monomers.. Its activity is regulated as follows. Activated by magnesium ions. Activated by calcium ions. Inhibited by the serine hydrolase inhibitor phenylmethanesulfonyl fluoride (PMSF). Catalyzes the hydrolysis of cutin, a polyester that forms the structure of plant cuticle. Shows esterase activity towards p-nitrophenol-linked aliphatic esters (pNP-aliphatic esters). Also hydrolyzes the triglyceride triolein. Capable of degrading the plastic poly(ethylene terephthalate) (PET), the most abundant polyester plastic in the world. In Thermobifida fusca (strain YX), this protein is Cutinase.